A 267-amino-acid chain; its full sequence is uncharacterized protein (267 aa).

The 197-residue stretch at 2–198 (LGANGAGKTT…FRNKFIVIEG (197 aa)) folds into the ABC transporter domain. 3–10 (GANGAGKT) lines the ATP pocket.

Belongs to the ABC transporter superfamily.

This is an uncharacterized protein from Alkalihalophilus pseudofirmus (strain ATCC BAA-2126 / JCM 17055 / OF4) (Bacillus pseudofirmus).